Here is a 239-residue protein sequence, read N- to C-terminus: Zwei Ig domain protein zig-7 (239 aa).

Residues 1–21 (MKLINCISIALLCTLVDFSSA) form the signal peptide. N43 is a glycosylation site (N-linked (GlcNAc...) asparagine). In terms of domain architecture, Ig-like C2-type spans 145–211 (PHVIGAERRG…TEDHIGKYRC (67 aa)). C164 and C211 are joined by a disulfide.

Expressed in body wall muscles.

It localises to the secreted. Its function is as follows. Probably not involved in maintaining the position of ASI and ASH head neuron cell bodies and ventral nerve cord axons of PVQ, PVP, RMEV, AVK and HSN neurons. The sequence is that of Zwei Ig domain protein zig-7 from Caenorhabditis elegans.